The following is a 131-amino-acid chain: Phosphoribosyl-AMP cyclohydrolase (131 aa).

Aspartate 74 is a binding site for Mg(2+). Cysteine 75 is a binding site for Zn(2+). 2 residues coordinate Mg(2+): aspartate 76 and aspartate 78. The Zn(2+) site is built by cysteine 91 and cysteine 98.

The protein belongs to the PRA-CH family. In terms of assembly, homodimer. The cofactor is Mg(2+). Requires Zn(2+) as cofactor.

The protein localises to the cytoplasm. The enzyme catalyses 1-(5-phospho-beta-D-ribosyl)-5'-AMP + H2O = 1-(5-phospho-beta-D-ribosyl)-5-[(5-phospho-beta-D-ribosylamino)methylideneamino]imidazole-4-carboxamide. It participates in amino-acid biosynthesis; L-histidine biosynthesis; L-histidine from 5-phospho-alpha-D-ribose 1-diphosphate: step 3/9. Catalyzes the hydrolysis of the adenine ring of phosphoribosyl-AMP. The chain is Phosphoribosyl-AMP cyclohydrolase from Bradyrhizobium sp. (strain BTAi1 / ATCC BAA-1182).